The following is a 450-amino-acid chain: MKNSLSLDLTKTKPYVEEHELQYLESIIREMDNTLGKKTGSGNKFLGWMDLPINYNKEEFARIKKAAEKIKNTCDVFIVIGIGGSYLGSRAAIEMISNTFYNNLDKNQRKVPQIYFAGNNISSTYMADLLELVKDKDICVNVISKSGTTTEPAIAFRIFKELLENKYGKEGAKERIFATTDAAKGALRTLADSEGYETFVIPDDVGGRFSVLTPVGLLPIAASGIDIDEMMKGAADAREEYSSDNIEKNHVYRYVAVRNALYRKGKTTEMLVNFEPCLHYFGEWWKQLYGESEGKDGKGIFPAAADFSTDLHSMGQYIQEGLRNIFETFINVENPRKSIIVKEDKENLDGLNFLADKDMDYVNHQALRGTVLAHNDGGVPAMVLNVPELSAYYFGQLVYFFEKACGISGYLLGVNPFDQPGVEAYKKNMFALLGKPGYENMKATLEERLK.

Glutamate 291 functions as the Proton donor in the catalytic mechanism. Active-site residues include histidine 312 and lysine 426.

Belongs to the GPI family.

It localises to the cytoplasm. The enzyme catalyses alpha-D-glucose 6-phosphate = beta-D-fructose 6-phosphate. Its pathway is carbohydrate biosynthesis; gluconeogenesis. It functions in the pathway carbohydrate degradation; glycolysis; D-glyceraldehyde 3-phosphate and glycerone phosphate from D-glucose: step 2/4. In terms of biological role, catalyzes the reversible isomerization of glucose-6-phosphate to fructose-6-phosphate. The sequence is that of Glucose-6-phosphate isomerase from Clostridium botulinum (strain Hall / ATCC 3502 / NCTC 13319 / Type A).